The following is a 284-amino-acid chain: Bifunctional protein FolD (284 aa).

NADP(+) contacts are provided by residues 165-167 (GRS), Ser-190, and Val-231.

It belongs to the tetrahydrofolate dehydrogenase/cyclohydrolase family. In terms of assembly, homodimer.

The enzyme catalyses (6R)-5,10-methylene-5,6,7,8-tetrahydrofolate + NADP(+) = (6R)-5,10-methenyltetrahydrofolate + NADPH. It carries out the reaction (6R)-5,10-methenyltetrahydrofolate + H2O = (6R)-10-formyltetrahydrofolate + H(+). It participates in one-carbon metabolism; tetrahydrofolate interconversion. In terms of biological role, catalyzes the oxidation of 5,10-methylenetetrahydrofolate to 5,10-methenyltetrahydrofolate and then the hydrolysis of 5,10-methenyltetrahydrofolate to 10-formyltetrahydrofolate. This Geobacillus kaustophilus (strain HTA426) protein is Bifunctional protein FolD.